Consider the following 545-residue polypeptide: ATP synthase subunit alpha (545 aa).

ATP is bound at residue 173–180; it reads GDRQTGKT.

It belongs to the ATPase alpha/beta chains family. In terms of assembly, F-type ATPases have 2 components, CF(1) - the catalytic core - and CF(0) - the membrane proton channel. CF(1) has five subunits: alpha(3), beta(3), gamma(1), delta(1), epsilon(1). CF(0) has three main subunits: a(1), b(2) and c(9-12). The alpha and beta chains form an alternating ring which encloses part of the gamma chain. CF(1) is attached to CF(0) by a central stalk formed by the gamma and epsilon chains, while a peripheral stalk is formed by the delta and b chains.

It localises to the cell membrane. The catalysed reaction is ATP + H2O + 4 H(+)(in) = ADP + phosphate + 5 H(+)(out). Produces ATP from ADP in the presence of a proton gradient across the membrane. The alpha chain is a regulatory subunit. The chain is ATP synthase subunit alpha from Clavibacter michiganensis subsp. michiganensis (strain NCPPB 382).